The chain runs to 238 residues: Orotidine 5'-phosphate decarboxylase (238 aa).

Substrate contacts are provided by residues Asp-18, Lys-40, 67 to 76 (DMKLLDIDNT), Thr-122, Arg-183, Gln-192, and Arg-213. The Proton donor role is filled by Lys-69.

It belongs to the OMP decarboxylase family. Type 1 subfamily. In terms of assembly, homodimer.

The enzyme catalyses orotidine 5'-phosphate + H(+) = UMP + CO2. The protein operates within pyrimidine metabolism; UMP biosynthesis via de novo pathway; UMP from orotate: step 2/2. Catalyzes the decarboxylation of orotidine 5'-monophosphate (OMP) to uridine 5'-monophosphate (UMP). This Brucella melitensis biotype 2 (strain ATCC 23457) protein is Orotidine 5'-phosphate decarboxylase.